We begin with the raw amino-acid sequence, 418 residues long: Zinc finger protein 566 (418 aa).

Positions valine 6–proline 77 constitute a KRAB domain. A C2H2-type 1; degenerate zinc finger spans residues lysine 169 to histidine 193. 7 consecutive C2H2-type zinc fingers follow at residues tyrosine 199 to histidine 221, phenylalanine 227 to histidine 249, tyrosine 255 to histidine 277, tyrosine 283 to histidine 305, tyrosine 311 to histidine 333, tyrosine 339 to histidine 361, and tyrosine 367 to histidine 389. Glycyl lysine isopeptide (Lys-Gly) (interchain with G-Cter in SUMO2) cross-links involve residues lysine 314 and lysine 328.

It belongs to the krueppel C2H2-type zinc-finger protein family.

The protein localises to the nucleus. Functionally, may be involved in transcriptional regulation. In Homo sapiens (Human), this protein is Zinc finger protein 566 (ZNF566).